The following is a 149-amino-acid chain: SKP1-like protein 14 (149 aa).

Residues 91-149 are interaction with the F-box domain of F-box proteins; sequence LLAANYLNIKGLLDLSAQTVADRIKDKTPEEIREIFNIENDFTPEEEAAVRKENAWAFE.

This sequence belongs to the SKP1 family. In terms of assembly, part of a SCF (SKP1-cullin-F-box) protein ligase complex. Interacts with CPR1/CPR30, At3g61590, At4g39550 and At5g49610. As to expression, restricted to inflorescences, pollen and leaves.

Its subcellular location is the nucleus. The protein operates within protein modification; protein ubiquitination. Its function is as follows. Involved in ubiquitination and subsequent proteasomal degradation of target proteins. Together with CUL1, RBX1 and a F-box protein, it forms a SCF E3 ubiquitin ligase complex. The functional specificity of this complex depends on the type of F-box protein. In the SCF complex, it serves as an adapter that links the F-box protein to CUL1. This Arabidopsis thaliana (Mouse-ear cress) protein is SKP1-like protein 14 (ASK14).